A 277-amino-acid chain; its full sequence is Short chain dehydrogenase penD (277 aa).

The NADP(+) site is built by Ile-28, Asp-76, and Asn-105. Residues Ser-158 and Ser-159 each act as proton donor in the active site. The NADP(+) site is built by Tyr-173, Lys-177, and Thr-209. Catalysis depends on Tyr-173, which acts as the Proton acceptor. Lys-177 functions as the Lowers pKa of active site Tyr in the catalytic mechanism.

The protein belongs to the short-chain dehydrogenases/reductases (SDR) family.

It catalyses the reaction yaequinolone D + NADPH + H(+) = penigequinolone A + NADP(+) + H2O. The catalysed reaction is yaequinolone D + NADPH + H(+) = penigequinolone B + NADP(+) + H2O. The protein operates within secondary metabolite biosynthesis. It participates in alkaloid biosynthesis. Its pathway is mycotoxin biosynthesis. Short chain dehydrogenase; part of the gene cluster that mediates the biosynthesis of penigequinolones, potent insecticidal alkaloids that contain a highly modified 10-carbon prenyl group. The first stage is catalyzed by the nonribosomal peptide synthetase penN that condenses anthranilic acid and O-methyl-L-tyrosine to produce 4'-methoxycyclopeptin. 4'-methoxycyclopeptin is then converted to 4'-methoxydehydrocyclopeptin by the ketoglutarate-dependent dioxygenase penM through dehydrogenation to form a double bond between C-alpha and C-beta of the O-methyltyrosine side chain. PenM also converts its first product methoxydehydrocyclopeptin to 4'-methoxycyclopenin. The following conversion of 4'methoxycyclopenin into 4'-methoxyviridicatin is catalyzed by the cyclopenase penL. 4'-methoxyviridicatin is the precursor of quinolone natural products, and is further converted to quinolinone B. The prenyltransferase penI then catalyzes the canonical Friedel-Crafts alkylation of quinolinone B with dimethylallyl cation to yield dimethylallyl quinolone, which is subjected to FAD-dependent dehydrogenation by the FAD-linked oxidoreductase penH to yield conjugated aryl diene. The delta(3') double bond then serves as the site of the second alkylation with DMAPP catalyzed by the prenyltransferase penG to yield a carbenium ion intermediate, which can be attacked by H(2)O to yield a styrenyl quinolone containing a C3'-hydroxyprenyl chain, or undergo cyclization to yield yaequinolones J1 and J2. The conversion of the styrenyl quinolone into the tetrahydrofuran-containing yaequinolone C is performed by the FAD-dependent monooxygenase penE and involves epoxidation of the terminal C7'-C8' olefin, followed by epoxide ring opening initiated by the C3' hydroxyl group. The predicted cysteine hydrolase penJ acts as an epoxide hydrolase that enhances the rate of the 5-exo-tet cyclization step, increasing the yield of yaequinolone C. PenF catalyzes the cationic rearrangement of the epoxide formed by penE (before ring opening to produce yaequinolone C) into yaequinolone D. Finally, the short-chain dehydrogenase/reductase (SDR)-like reductase penD, catalyzes both the dehydration of yaequinolone D and the reduction of the resulting oxonium to yield penigequinolone. The protein is Short chain dehydrogenase penD of Penicillium thymicola.